Consider the following 31-residue polypeptide: Cytochrome b6-f complex subunit 6 (31 aa).

Residues 4 to 24 (ITSFFGFLLAALTITSVLFIG) traverse the membrane as a helical segment.

This sequence belongs to the PetL family. The 4 large subunits of the cytochrome b6-f complex are cytochrome b6, subunit IV (17 kDa polypeptide, PetD), cytochrome f and the Rieske protein, while the 4 small subunits are PetG, PetL, PetM and PetN. The complex functions as a dimer.

Its subcellular location is the plastid. It is found in the chloroplast thylakoid membrane. In terms of biological role, component of the cytochrome b6-f complex, which mediates electron transfer between photosystem II (PSII) and photosystem I (PSI), cyclic electron flow around PSI, and state transitions. PetL is important for photoautotrophic growth as well as for electron transfer efficiency and stability of the cytochrome b6-f complex. The polypeptide is Cytochrome b6-f complex subunit 6 (Oenothera elata subsp. hookeri (Hooker's evening primrose)).